The chain runs to 338 residues: DNA-directed RNA polymerase subunit alpha (338 aa).

Residues 1–10 (MIQKNWQTLE) show a composition bias toward polar residues. Residues 1-24 (MIQKNWQTLEKPSKLDITPGSDPK) are disordered. The alpha N-terminal domain (alpha-NTD) stretch occupies residues 1–234 (MIQKNWQTLE…DQLQMFINFE (234 aa)). Residues 250-338 (FNKNLLRKVD…DLAKRLEEPY (89 aa)) form an alpha C-terminal domain (alpha-CTD) region.

It belongs to the RNA polymerase alpha chain family. In terms of assembly, homodimer. The RNAP catalytic core consists of 2 alpha, 1 beta, 1 beta' and 1 omega subunit. When a sigma factor is associated with the core the holoenzyme is formed, which can initiate transcription.

It catalyses the reaction RNA(n) + a ribonucleoside 5'-triphosphate = RNA(n+1) + diphosphate. Functionally, DNA-dependent RNA polymerase catalyzes the transcription of DNA into RNA using the four ribonucleoside triphosphates as substrates. The protein is DNA-directed RNA polymerase subunit alpha of Rhodospirillum centenum (strain ATCC 51521 / SW).